The sequence spans 53 residues: Conotoxin Cal22e (53 aa).

The propeptide occupies Gly-1–Ala-5.

Contains 4 disulfide bonds. In terms of tissue distribution, expressed by the venom duct.

The protein localises to the secreted. Probable neurotoxin with unknown target. Possibly targets ion channels. In Californiconus californicus (California cone), this protein is Conotoxin Cal22e.